A 319-amino-acid polypeptide reads, in one-letter code: tRNA dimethylallyltransferase (319 aa).

ATP is bound at residue 9–16 (GPTAVGKS). 11 to 16 (TAVGKS) provides a ligand contact to substrate. The interaction with substrate tRNA stretch occupies residues 39-42 (DSMQ).

Belongs to the IPP transferase family. In terms of assembly, monomer. Mg(2+) serves as cofactor.

It catalyses the reaction adenosine(37) in tRNA + dimethylallyl diphosphate = N(6)-dimethylallyladenosine(37) in tRNA + diphosphate. In terms of biological role, catalyzes the transfer of a dimethylallyl group onto the adenine at position 37 in tRNAs that read codons beginning with uridine, leading to the formation of N6-(dimethylallyl)adenosine (i(6)A). This Thermobifida fusca (strain YX) protein is tRNA dimethylallyltransferase.